Here is a 146-residue protein sequence, read N- to C-terminus: UPF0178 protein BCG9842_B2187 (146 aa).

This sequence belongs to the UPF0178 family.

In Bacillus cereus (strain G9842), this protein is UPF0178 protein BCG9842_B2187.